A 110-amino-acid polypeptide reads, in one-letter code: METIAKHRYARTSVQKARLVADLVRGKKVAQALEILTFTNKKAAALVKKVLESAIANAEHNDGADIDDLKVAKIFVDEGPSMKRVMPRAKGRADRILKRTSHITVVVSDR.

The protein belongs to the universal ribosomal protein uL22 family. As to quaternary structure, part of the 50S ribosomal subunit.

Its function is as follows. This protein binds specifically to 23S rRNA; its binding is stimulated by other ribosomal proteins, e.g. L4, L17, and L20. It is important during the early stages of 50S assembly. It makes multiple contacts with different domains of the 23S rRNA in the assembled 50S subunit and ribosome. Functionally, the globular domain of the protein is located near the polypeptide exit tunnel on the outside of the subunit, while an extended beta-hairpin is found that lines the wall of the exit tunnel in the center of the 70S ribosome. The chain is Large ribosomal subunit protein uL22 from Histophilus somni (strain 2336) (Haemophilus somnus).